The following is a 183-amino-acid chain: ATP synthase subunit delta (183 aa).

The protein belongs to the ATPase delta chain family. As to quaternary structure, F-type ATPases have 2 components, F(1) - the catalytic core - and F(0) - the membrane proton channel. F(1) has five subunits: alpha(3), beta(3), gamma(1), delta(1), epsilon(1). F(0) has three main subunits: a(1), b(2) and c(10-14). The alpha and beta chains form an alternating ring which encloses part of the gamma chain. F(1) is attached to F(0) by a central stalk formed by the gamma and epsilon chains, while a peripheral stalk is formed by the delta and b chains.

Its subcellular location is the cell inner membrane. F(1)F(0) ATP synthase produces ATP from ADP in the presence of a proton or sodium gradient. F-type ATPases consist of two structural domains, F(1) containing the extramembraneous catalytic core and F(0) containing the membrane proton channel, linked together by a central stalk and a peripheral stalk. During catalysis, ATP synthesis in the catalytic domain of F(1) is coupled via a rotary mechanism of the central stalk subunits to proton translocation. Its function is as follows. This protein is part of the stalk that links CF(0) to CF(1). It either transmits conformational changes from CF(0) to CF(1) or is implicated in proton conduction. This Ehrlichia canis (strain Jake) protein is ATP synthase subunit delta.